Here is a 905-residue protein sequence, read N- to C-terminus: Probable coatomer subunit gamma (905 aa).

5 HEAT repeats span residues Thr-265–Asp-302, Asp-303–His-340, Asp-374–Arg-412, Gln-414–Glu-450, and Lys-525–Phe-563. Ser-604 carries the post-translational modification Phosphoserine.

This sequence belongs to the COPG family. As to quaternary structure, oligomeric complex that consists of at least the alpha, beta, beta', gamma, delta, epsilon and zeta subunits.

Its subcellular location is the cytoplasm. It is found in the golgi apparatus membrane. The protein resides in the cytoplasmic vesicle. It localises to the COPI-coated vesicle membrane. The coatomer is a cytosolic protein complex that binds to dilysine motifs and reversibly associates with Golgi non-clathrin-coated vesicles, which further mediate biosynthetic protein transport from the ER, via the Golgi up to the trans Golgi network. Coatomer complex is required for budding from Golgi membranes, and is essential for the retrograde Golgi-to-ER transport of dilysine-tagged proteins. In Schizosaccharomyces pombe (strain 972 / ATCC 24843) (Fission yeast), this protein is Probable coatomer subunit gamma (sec21).